The sequence spans 176 residues: N5-carboxyaminoimidazole ribonucleotide mutase (176 aa).

Substrate contacts are provided by Ser-14, Asp-17, and Arg-44.

The protein belongs to the AIR carboxylase family. Class I subfamily.

The enzyme catalyses 5-carboxyamino-1-(5-phospho-D-ribosyl)imidazole + H(+) = 5-amino-1-(5-phospho-D-ribosyl)imidazole-4-carboxylate. It functions in the pathway purine metabolism; IMP biosynthesis via de novo pathway; 5-amino-1-(5-phospho-D-ribosyl)imidazole-4-carboxylate from 5-amino-1-(5-phospho-D-ribosyl)imidazole (N5-CAIR route): step 2/2. Functionally, catalyzes the conversion of N5-carboxyaminoimidazole ribonucleotide (N5-CAIR) to 4-carboxy-5-aminoimidazole ribonucleotide (CAIR). The chain is N5-carboxyaminoimidazole ribonucleotide mutase from Synechocystis sp. (strain ATCC 27184 / PCC 6803 / Kazusa).